The primary structure comprises 141 residues: Large ribosomal subunit protein uL16 (141 aa).

Belongs to the universal ribosomal protein uL16 family. In terms of assembly, part of the 50S ribosomal subunit.

Its function is as follows. Binds 23S rRNA and is also seen to make contacts with the A and possibly P site tRNAs. The sequence is that of Large ribosomal subunit protein uL16 from Nostoc punctiforme (strain ATCC 29133 / PCC 73102).